Here is a 281-residue protein sequence, read N- to C-terminus: MKIQRKPEWLRKKVPQGEQAAMRGLLSELKLNTVCQQALCPNIAECFGCGQATFLILGRDCTRQCSFCNVDKAPRPQAPDADEPRRLAEAVLRLKLSHVVITSPTRDDLADGGAGHYAATVAAVREVSPGTAVELLVPDFGGDHAALATVLAAQPSILAHNLETVPRLYEVRKGADYQRSLDLLQQAALRAPAIPTKSGIMLGLGEELDEVRAVLQDLRRVGCSYLSLGQYLAPSKRHQPVVAYIPPQQFDLLRDEALALGFRHVESGPYVRSSYHAANYA.

[4Fe-4S] cluster-binding residues include cysteine 35, cysteine 40, cysteine 46, cysteine 61, cysteine 65, cysteine 68, and serine 274. A Radical SAM core domain is found at 47 to 263 (FGCGQATFLI…RDEALALGFR (217 aa)).

The protein belongs to the radical SAM superfamily. Lipoyl synthase family. It depends on [4Fe-4S] cluster as a cofactor.

It localises to the cytoplasm. The enzyme catalyses [[Fe-S] cluster scaffold protein carrying a second [4Fe-4S](2+) cluster] + N(6)-octanoyl-L-lysyl-[protein] + 2 oxidized [2Fe-2S]-[ferredoxin] + 2 S-adenosyl-L-methionine + 4 H(+) = [[Fe-S] cluster scaffold protein] + N(6)-[(R)-dihydrolipoyl]-L-lysyl-[protein] + 4 Fe(3+) + 2 hydrogen sulfide + 2 5'-deoxyadenosine + 2 L-methionine + 2 reduced [2Fe-2S]-[ferredoxin]. It participates in protein modification; protein lipoylation via endogenous pathway; protein N(6)-(lipoyl)lysine from octanoyl-[acyl-carrier-protein]: step 2/2. Functionally, catalyzes the radical-mediated insertion of two sulfur atoms into the C-6 and C-8 positions of the octanoyl moiety bound to the lipoyl domains of lipoate-dependent enzymes, thereby converting the octanoylated domains into lipoylated derivatives. This Trichlorobacter lovleyi (strain ATCC BAA-1151 / DSM 17278 / SZ) (Geobacter lovleyi) protein is Lipoyl synthase.